Reading from the N-terminus, the 163-residue chain is MTLRLAEHRDLEAVVAIYNSTIASRMVTADTEPVTPEDRMEWFSGHTESRPLYVAEDENGNVAAWISFETFYGRPAYNKTAEVSIYIDEACRGKGVGSYLLQEALRIAPNLGIRSLMAFIFGHNKPSLKLFEKHGFAEWGLFPGIAEMDGKRYDLKILGRELS.

The N-acetyltransferase domain maps to 1–158; the sequence is MTLRLAEHRD…DGKRYDLKIL (158 aa). Acetyl-CoA contacts are provided by residues 85-87, 94-98, and 124-126; these read IYI, KGVGS, and NKP.

Belongs to the acetyltransferase family. PAT/BAR subfamily.

The enzyme catalyses phosphinothricin + acetyl-CoA = N-acetylphosphinothricin + CoA + H(+). This enzyme is an effector of phosphinothricin tripeptide (PTT or bialaphos) resistance. Inactivates PTT by transfer of an acetyl group. This Bacillus subtilis (strain 168) protein is Putative phosphinothricin acetyltransferase YwnH (ywnH).